The primary structure comprises 104 residues: L-rhamnose mutarotase (104 aa).

Tyr-18 lines the substrate pocket. His-22 acts as the Proton donor in catalysis. Substrate is bound by residues Tyr-41 and 76–77 (WW).

This sequence belongs to the rhamnose mutarotase family. In terms of assembly, homodimer.

It is found in the cytoplasm. The catalysed reaction is alpha-L-rhamnose = beta-L-rhamnose. It functions in the pathway carbohydrate metabolism; L-rhamnose metabolism. Involved in the anomeric conversion of L-rhamnose. The polypeptide is L-rhamnose mutarotase (Oceanobacillus iheyensis (strain DSM 14371 / CIP 107618 / JCM 11309 / KCTC 3954 / HTE831)).